A 538-amino-acid chain; its full sequence is Chaperonin GroEL (538 aa).

ATP is bound by residues 30-33 (TLGP), 87-91 (DGTTT), Gly-415, 479-481 (DAA), and Asp-495.

It belongs to the chaperonin (HSP60) family. In terms of assembly, forms a cylinder of 14 subunits composed of two heptameric rings stacked back-to-back. Interacts with the co-chaperonin GroES.

It is found in the cytoplasm. It catalyses the reaction ATP + H2O + a folded polypeptide = ADP + phosphate + an unfolded polypeptide.. Its function is as follows. Together with its co-chaperonin GroES, plays an essential role in assisting protein folding. The GroEL-GroES system forms a nano-cage that allows encapsulation of the non-native substrate proteins and provides a physical environment optimized to promote and accelerate protein folding. This chain is Chaperonin GroEL, found in Dictyoglomus thermophilum (strain ATCC 35947 / DSM 3960 / H-6-12).